Here is an 86-residue protein sequence, read N- to C-terminus: Apolipoprotein C-I (86 aa).

A signal peptide spans 1-26 (MRLFLSLPVLVVALLTILEGPGPAQG).

This sequence belongs to the apolipoprotein C1 family.

The protein localises to the secreted. Functionally, inhibitor of lipoprotein binding to the low density lipoprotein (LDL) receptor, LDL receptor-related protein, and very low density lipoprotein (VLDL) receptor. Associates with high density lipoproteins (HDL) and the triacylglycerol-rich lipoproteins in the plasma and makes up about 10% of the protein of the VLDL and 2% of that of HDL. Appears to interfere directly with fatty acid uptake and is also the major plasma inhibitor of cholesteryl ester transfer protein (CETP). Binds free fatty acids and reduces their intracellular esterification. Modulates the interaction of APOE with beta-migrating VLDL and inhibits binding of beta-VLDL to the LDL receptor-related protein. This Plecturocebus moloch (Dusky titi monkey) protein is Apolipoprotein C-I (APOC1).